We begin with the raw amino-acid sequence, 497 residues long: Proline--tRNA ligase (497 aa).

This sequence belongs to the class-II aminoacyl-tRNA synthetase family. ProS type 3 subfamily. As to quaternary structure, homodimer.

It localises to the cytoplasm. The enzyme catalyses tRNA(Pro) + L-proline + ATP = L-prolyl-tRNA(Pro) + AMP + diphosphate. Its function is as follows. Catalyzes the attachment of proline to tRNA(Pro) in a two-step reaction: proline is first activated by ATP to form Pro-AMP and then transferred to the acceptor end of tRNA(Pro). The polypeptide is Proline--tRNA ligase (Deinococcus geothermalis (strain DSM 11300 / CIP 105573 / AG-3a)).